Here is a 263-residue protein sequence, read N- to C-terminus: Diphthine synthase (263 aa).

Residues L11, D89, A92, 117–118, L166, and L208 contribute to the S-adenosyl-L-methionine site; that span reads SV.

It belongs to the diphthine synthase family. In terms of assembly, homodimer.

It carries out the reaction 2-[(3S)-amino-3-carboxypropyl]-L-histidyl-[translation elongation factor 2] + 3 S-adenosyl-L-methionine = diphthine-[translation elongation factor 2] + 3 S-adenosyl-L-homocysteine + 3 H(+). Its pathway is protein modification; peptidyl-diphthamide biosynthesis. In terms of biological role, S-adenosyl-L-methionine-dependent methyltransferase that catalyzes the trimethylation of the amino group of the modified target histidine residue in translation elongation factor 2 (EF-2), to form an intermediate called diphthine. The three successive methylation reactions represent the second step of diphthamide biosynthesis. The chain is Diphthine synthase from Methanopyrus kandleri (strain AV19 / DSM 6324 / JCM 9639 / NBRC 100938).